Reading from the N-terminus, the 501-residue chain is Endoglucanase 8 (501 aa).

A signal peptide spans 1–35; it reads MKPRSSRDGHNAAAAAALLLAALVLSGDVLPAVVA. Asp-95 functions as the Nucleophile in the catalytic mechanism. N-linked (GlcNAc...) asparagine glycosylation is present at Asn-298. Residue His-414 is part of the active site. N-linked (GlcNAc...) asparagine glycosylation is present at Asn-462. Asp-465 is a catalytic residue. The N-linked (GlcNAc...) asparagine glycan is linked to Asn-469. Glu-474 is a catalytic residue.

This sequence belongs to the glycosyl hydrolase 9 (cellulase E) family.

Its subcellular location is the secreted. The enzyme catalyses Endohydrolysis of (1-&gt;4)-beta-D-glucosidic linkages in cellulose, lichenin and cereal beta-D-glucans.. This Oryza sativa subsp. japonica (Rice) protein is Endoglucanase 8.